The chain runs to 413 residues: Putative F-box/kelch-repeat protein At3g22870 (413 aa).

The 52-residue stretch at 2–53 (TLTISDLPRDLKKKIFSRIPLRYVRALRLTCKEWETLIKSRSLKIDEEESQM) folds into the F-box domain. Kelch repeat units follow at residues 156 to 202 (LLRF…IGVS) and 331 to 379 (KVFI…RRRQ).

The polypeptide is Putative F-box/kelch-repeat protein At3g22870 (Arabidopsis thaliana (Mouse-ear cress)).